Consider the following 269-residue polypeptide: Triosephosphate isomerase (269 aa).

Position 8–10 (8–10 (NWK)) interacts with substrate. Histidine 105 serves as the catalytic Electrophile. The active-site Proton acceptor is the glutamate 183. Substrate-binding positions include glycine 189, serine 227, and 248-249 (GG).

Belongs to the triosephosphate isomerase family. As to quaternary structure, homodimer.

The protein resides in the cytoplasm. The enzyme catalyses D-glyceraldehyde 3-phosphate = dihydroxyacetone phosphate. Its pathway is carbohydrate biosynthesis; gluconeogenesis. It participates in carbohydrate degradation; glycolysis; D-glyceraldehyde 3-phosphate from glycerone phosphate: step 1/1. Involved in the gluconeogenesis. Catalyzes stereospecifically the conversion of dihydroxyacetone phosphate (DHAP) to D-glyceraldehyde-3-phosphate (G3P). This chain is Triosephosphate isomerase, found in Psychrobacter arcticus (strain DSM 17307 / VKM B-2377 / 273-4).